A 263-amino-acid polypeptide reads, in one-letter code: Ribonuclease HII (263 aa).

Positions 71–262 (QAIAGIDEVG…VKSMCCDSTN (192 aa)) constitute an RNase H type-2 domain. D77, E78, and D172 together coordinate a divalent metal cation.

This sequence belongs to the RNase HII family. Requires Mn(2+) as cofactor. The cofactor is Mg(2+).

The protein resides in the cytoplasm. It carries out the reaction Endonucleolytic cleavage to 5'-phosphomonoester.. Functionally, endonuclease that specifically degrades the RNA of RNA-DNA hybrids. This Streptococcus pyogenes serotype M3 (strain ATCC BAA-595 / MGAS315) protein is Ribonuclease HII.